Consider the following 225-residue polypeptide: ATP-dependent dethiobiotin synthetase BioD (225 aa).

ATP is bound at residue 12–17 (EIGKTY). Thr-16 is a binding site for Mg(2+). Residue Lys-37 is part of the active site. Ser-41 is a binding site for substrate. ATP is bound by residues Asp-55, 122–125 (EGVG), and 182–183 (SE). Residues Asp-55 and Glu-122 each contribute to the Mg(2+) site.

This sequence belongs to the dethiobiotin synthetase family. Homodimer. Mg(2+) is required as a cofactor.

It localises to the cytoplasm. It catalyses the reaction (7R,8S)-7,8-diammoniononanoate + CO2 + ATP = (4R,5S)-dethiobiotin + ADP + phosphate + 3 H(+). It functions in the pathway cofactor biosynthesis; biotin biosynthesis; biotin from 7,8-diaminononanoate: step 1/2. Functionally, catalyzes a mechanistically unusual reaction, the ATP-dependent insertion of CO2 between the N7 and N8 nitrogen atoms of 7,8-diaminopelargonic acid (DAPA, also called 7,8-diammoniononanoate) to form a ureido ring. The polypeptide is ATP-dependent dethiobiotin synthetase BioD (Methylobacterium nodulans (strain LMG 21967 / CNCM I-2342 / ORS 2060)).